A 472-amino-acid polypeptide reads, in one-letter code: Transmembrane protein 8B (472 aa).

Over residues 1 to 10 (MNMPQSLGTQ) the composition is skewed to low complexity. Positions 1 to 24 (MNMPQSLGTQPLPPEPPSLGTPIE) are disordered. Topologically, residues 1-233 (MNMPQSLGTQ…ADALTYGFQL (233 aa)) are extracellular. Residue Asn-100 is glycosylated (N-linked (GlcNAc...) asparagine). One can recognise an EGF-like domain in the interval 182-221 (FLSPCVDDCGPYGQCKLLRTHNYLYAACECKAGWRGWGCT). 3 disulfide bridges follow: Cys-186–Cys-196, Cys-190–Cys-209, and Cys-211–Cys-220. Residues 234–254 (LSTLLLCLSNLMFLPPVVLAI) traverse the membrane as a helical segment. Residues 255–257 (RSR) lie on the Cytoplasmic side of the membrane. A helical transmembrane segment spans residues 258–277 (YVLEAAVYTFTMFFSTFYHA). At 278-292 (CDQPGIVVFCIMDYD) the chain is on the extracellular side. Residues 293–313 (VLQFCDFLGSLMSVWVTVIAM) traverse the membrane as a helical segment. Topologically, residues 314 to 315 (AR) are cytoplasmic. The helical transmembrane segment at 316–336 (LQPVIKQVLYLLGAMLLSMAL) threads the bilayer. The Extracellular portion of the chain corresponds to 337–342 (QLDRHG). Residues 343–363 (LWNLLGPSLFALGILATAWTV) traverse the membrane as a helical segment. The Cytoplasmic portion of the chain corresponds to 364–379 (RSVRRRHCYPPTWRRW). A helical transmembrane segment spans residues 380-400 (LFYLCPGSLIAGSAVLLYAFV). Residues 401 to 405 (ETRDN) lie on the Extracellular side of the membrane. A helical membrane pass occupies residues 406–426 (YFYIHSIWHMLIAGSVGFLLP). The Cytoplasmic portion of the chain corresponds to 427 to 472 (PRAKTDRRVPSGARARGCGYQLCINEQEELGLVGPGGTTVSSICVS).

Belongs to the TMEM8 family. May interact with EZR. Post-translationally, N-glycosylated.

It is found in the cell membrane. It localises to the cytoplasm. The protein resides in the nucleus. Its subcellular location is the mitochondrion. The protein localises to the endoplasmic reticulum. In terms of biological role, may function as a regulator of the EGFR pathway. Probable tumor suppressor which may function in cell growth, proliferation and adhesion. This chain is Transmembrane protein 8B (Tmem8b), found in Mus musculus (Mouse).